The sequence spans 151 residues: 3-hydroxyacyl-[acyl-carrier-protein] dehydratase FabZ (151 aa).

H54 is a catalytic residue.

Belongs to the thioester dehydratase family. FabZ subfamily.

The protein resides in the cytoplasm. It carries out the reaction a (3R)-hydroxyacyl-[ACP] = a (2E)-enoyl-[ACP] + H2O. Its function is as follows. Involved in unsaturated fatty acids biosynthesis. Catalyzes the dehydration of short chain beta-hydroxyacyl-ACPs and long chain saturated and unsaturated beta-hydroxyacyl-ACPs. The chain is 3-hydroxyacyl-[acyl-carrier-protein] dehydratase FabZ from Blochmanniella floridana.